The primary structure comprises 210 residues: uncharacterized protein (210 aa).

This is an uncharacterized protein from Escherichia coli (strain K12).